We begin with the raw amino-acid sequence, 67 residues long: Large ribosomal subunit protein bL35 (67 aa).

This sequence belongs to the bacterial ribosomal protein bL35 family.

The chain is Large ribosomal subunit protein bL35 from Rhizobium johnstonii (strain DSM 114642 / LMG 32736 / 3841) (Rhizobium leguminosarum bv. viciae).